Consider the following 54-residue polypeptide: Ferredoxin (54 aa).

4Fe-4S ferredoxin-type domains are found at residues 2–25 and 26–54; these read YVIN…IQQG and SIYA…NPED. [4Fe-4S] cluster contacts are provided by C8, C11, C14, C18, C35, C38, C41, and C45.

[4Fe-4S] cluster is required as a cofactor.

Its function is as follows. Ferredoxins are iron-sulfur proteins that transfer electrons in a wide variety of metabolic reactions. The sequence is that of Ferredoxin from Peptoniphilus asaccharolyticus (Peptostreptococcus asaccharolyticus).